The primary structure comprises 400 residues: Putative cytochrome P450 133B2 (400 aa).

Cysteine 348 contacts heme.

The protein belongs to the cytochrome P450 family. The cofactor is heme.

This is Putative cytochrome P450 133B2 (cyp133B2) from Xylella fastidiosa (strain 9a5c).